We begin with the raw amino-acid sequence, 94 residues long: Co-chaperonin GroES (94 aa).

The protein belongs to the GroES chaperonin family. Heptamer of 7 subunits arranged in a ring. Interacts with the chaperonin GroEL.

It is found in the cytoplasm. Functionally, together with the chaperonin GroEL, plays an essential role in assisting protein folding. The GroEL-GroES system forms a nano-cage that allows encapsulation of the non-native substrate proteins and provides a physical environment optimized to promote and accelerate protein folding. GroES binds to the apical surface of the GroEL ring, thereby capping the opening of the GroEL channel. The sequence is that of Co-chaperonin GroES from Lactobacillus acidophilus (strain ATCC 700396 / NCK56 / N2 / NCFM).